The following is a 307-amino-acid chain: Oxygen-dependent coproporphyrinogen-III oxidase (307 aa).

A substrate-binding site is contributed by S94. A divalent metal cation contacts are provided by H98 and H108. Residue H108 is the Proton donor of the active site. Residue 110–112 (NVR) participates in substrate binding. Positions 147 and 177 each coordinate a divalent metal cation. Positions 242–277 (YVEFNLVWDRGTLFGLQSGGRTESILMSMPPLAQWQ) are important for dimerization. A substrate-binding site is contributed by 260-262 (GGR).

It belongs to the aerobic coproporphyrinogen-III oxidase family. As to quaternary structure, homodimer. It depends on a divalent metal cation as a cofactor.

It is found in the cytoplasm. The catalysed reaction is coproporphyrinogen III + O2 + 2 H(+) = protoporphyrinogen IX + 2 CO2 + 2 H2O. The protein operates within porphyrin-containing compound metabolism; protoporphyrin-IX biosynthesis; protoporphyrinogen-IX from coproporphyrinogen-III (O2 route): step 1/1. Its function is as follows. Involved in the heme biosynthesis. Catalyzes the aerobic oxidative decarboxylation of propionate groups of rings A and B of coproporphyrinogen-III to yield the vinyl groups in protoporphyrinogen-IX. The polypeptide is Oxygen-dependent coproporphyrinogen-III oxidase (Chromohalobacter salexigens (strain ATCC BAA-138 / DSM 3043 / CIP 106854 / NCIMB 13768 / 1H11)).